The sequence spans 148 residues: Lysozyme-like protein 6 (148 aa).

An N-terminal signal peptide occupies residues Met1–Gly19. Residues Asn20–Gly148 form the C-type lysozyme domain. 4 cysteine pairs are disulfide-bonded: Cys25/Cys145, Cys49/Cys133, Cys83/Cys98, and Cys94/Cys112. The active site involves Glu54. The N-linked (GlcNAc...) asparagine glycan is linked to Asn58. Residue Asp71 is part of the active site.

Belongs to the glycosyl hydrolase 22 family. As to quaternary structure, monomer. In terms of tissue distribution, expressed strongly in testis and epididymis and weakly in seminal vesicle, vas deferens, kidney and spleen. Highly expressed in primary spermatocytes and round spermatids (at protein level).

It is found in the secreted. It localises to the cell surface. The protein localises to the cell projection. Its subcellular location is the cilium. The protein resides in the flagellum. It carries out the reaction Hydrolysis of (1-&gt;4)-beta-linkages between N-acetylmuramic acid and N-acetyl-D-glucosamine residues in a peptidoglycan and between N-acetyl-D-glucosamine residues in chitodextrins.. Functionally, may be involved sperm-egg plasma membrane adhesion and fusion during fertilization. Exhibits bacteriolytic activity in vitro against Micrococcus luteus and Staphylococcus aureus. Shows weak bacteriolytic activity against Gram-positive bacteria at physiological pH. Bacteriolytic activity is pH-dependent, with a maximum at around pH 5.6. In Mus musculus (Mouse), this protein is Lysozyme-like protein 6 (Lyzl6).